The chain runs to 317 residues: Alkylsulfatase (317 aa).

Position 78 (H78) interacts with substrate. The Fe cation site is built by H105 and D107. Residue V108 participates in substrate binding. T132 lines the 2-oxoglutarate pocket. H261 is a binding site for Fe cation. The 2-oxoglutarate site is built by R272 and R276.

The protein belongs to the TfdA dioxygenase family. In terms of assembly, homotetramer. Fe(2+) serves as cofactor.

Functionally, alpha-ketoglutarate-dependent dioxygenase that in vitro catalyzes the oxygenolytic release of sulfite from hexylsulfate. The protein is Alkylsulfatase of Acinetobacter baylyi (strain ATCC 33305 / BD413 / ADP1).